The primary structure comprises 1200 residues: MDPPSLDTAIQHALAGLYPPFEATAPTVLGQVFRLLDSGFQGDGLSFLLDFLIPAKRLCEQVREAACAPYSHCLFLHEGWPLCLRDEVVVHLAPLNPLLLRQGDFYLQVEPQEEQSVCIMIKCLSLDLCTVDKKPVPEPAYPILFTQEWLEAINSDFEGNPLHNCLVASENGIAPVPWTKITSPEFVDDRPQVVNALCQAWGPLPLEALDLSSPQELHQASSPDNQVLPAQSLAKGKGRTYGSKYPGLIKVEQARCGEVAFRMDEVVSQDFEGDYVALLGFSQESRGESPSREAGTSSGCTSGALEEIAGTKETPLFQKILPLSEANEGPSLGNRACTKPESSEERPYNLGFRRKVNLKAPTHNSERPPQGSYMNVLEDALDCASGLRAGVSQEPAASKMQGPLGNPENMVQLRPGPRQASSPRLSPASPAAAASETKIEVKTKERNGRLPKPMPCPSRNTSSPEPPTPGLKFSFLRGQRQPSVTPEKASLQHNGPWKVLCSLYSPKPNRAKSLGKAGTTQTKTSGPATAPSPLTEEKAALPEASAGSPERGPTLEEEPPGPEPRIGALGVKVFRSRIACLPGGRDRAGRPLLLVSTTEGAWEAPWCTVSEVTKLLSYLCTIPRPEDKAKGLAVLIDARRQPPQPGLVSALQATQAQVPASIRAILFLGEKEAALQLQTLPDVQVEVLTSLKALSHHVDPSQLPAVLEGPFPYCHTEWVHFFQKLDPFLADLHQASSLLQASIEEFEKADPPGGMQEATRCLSKSKELMEAVLRDPGLLGLQREGGATLARLQHDASRLDFSPDVRSHLAAATALYSLVDEQLHVLVTASNSLLGKLELRVRLGRLEAAIHQVSDWMEQEGRRCLQSLTPKDGSLETVEKAHAEFENFFLQAAAQYRRGLELSKQAAQLGATARGAGEAERAEFPELAAFASTQRAFQAELTHFYMAAERQRTDLETLLHLHRFCKRMTWFHMDCQDLMAQLRLDKTSRVSPGDQRRLHRYLQRLASEFPAEKLAAVGLQVASLSRAGLGQELWEEARIRHEEIRMLLEKALTHSSCPEAPAAHSARPERRGVAAKGQGVSVEVTSKGRWDQPPLDSLGMDHLPKSYWPPGPPRGEQNRTFQAGSPPQEAGQAAEAEDGKGSHKLPDPAREHLLATTFFRQQPPRQSQVPRLTGGSFSSEGTDSQTSLEDSPQTSPLASL.

Disordered regions lie at residues 282 to 302 (SQES…GCTS), 323 to 372 (LSEA…PQGS), 392 to 491 (SQEP…KASL), 510 to 568 (RAKS…RIGA), and 1056 to 1200 (SCPE…LASL). A compositionally biased stretch (low complexity) spans 420 to 435 (ASSPRLSPASPAAAAS). A compositionally biased stretch (basic and acidic residues) spans 437–448 (TKIEVKTKERNG). Residues 518-527 (GTTQTKTSGP) show a composition bias toward polar residues. Positions 1137–1153 (EDGKGSHKLPDPAREHL) are enriched in basic and acidic residues. Over residues 1160 to 1171 (RQQPPRQSQVPR) the composition is skewed to low complexity. Residues 1175 to 1200 (GSFSSEGTDSQTSLEDSPQTSPLASL) are compositionally biased toward polar residues.

This is an uncharacterized protein from Homo sapiens (Human).